Reading from the N-terminus, the 443-residue chain is ATP-dependent protease ATPase subunit HslU (443 aa).

ATP contacts are provided by residues isoleucine 18, 60-65, aspartate 256, glutamate 321, and arginine 393; that span reads GVGKTE.

The protein belongs to the ClpX chaperone family. HslU subfamily. In terms of assembly, a double ring-shaped homohexamer of HslV is capped on each side by a ring-shaped HslU homohexamer. The assembly of the HslU/HslV complex is dependent on binding of ATP.

The protein resides in the cytoplasm. Functionally, ATPase subunit of a proteasome-like degradation complex; this subunit has chaperone activity. The binding of ATP and its subsequent hydrolysis by HslU are essential for unfolding of protein substrates subsequently hydrolyzed by HslV. HslU recognizes the N-terminal part of its protein substrates and unfolds these before they are guided to HslV for hydrolysis. This chain is ATP-dependent protease ATPase subunit HslU, found in Histophilus somni (strain 2336) (Haemophilus somnus).